Here is a 609-residue protein sequence, read N- to C-terminus: Chaperone protein DnaK (609 aa).

Thr-173 carries the post-translational modification Phosphothreonine; by autocatalysis. Residues 580–609 (QAAQGGGAEGQEPKKDNVVDADYEVVDDKK) are disordered. Acidic residues predominate over residues 598 to 609 (VDADYEVVDDKK).

Belongs to the heat shock protein 70 family.

In terms of biological role, acts as a chaperone. The polypeptide is Chaperone protein DnaK (Brevibacillus brevis (strain 47 / JCM 6285 / NBRC 100599)).